We begin with the raw amino-acid sequence, 538 residues long: [Pyruvate dehydrogenase [acetyl-transferring]]-phosphatase 1, mitochondrial (538 aa).

The transit peptide at 1-71 (MPAPTQLFFP…WWQYTQGRRY (71 aa)) directs the protein to the mitochondrion. A PPM-type phosphatase domain is found at 109–525 (VLGFDSNQLP…DDITIIVVQF (417 aa)). Residues D144 and G145 each contribute to the Mn(2+) site. Position 202 is an N6-acetyllysine (K202). Mn(2+)-binding residues include D418 and D516.

This sequence belongs to the PP2C family. In terms of assembly, heterodimer of a catalytic (PDP1) and a regulatory (PDPR) subunit. The cofactor is Mn(2+). Mg(2+) is required as a cofactor.

The protein resides in the mitochondrion. It catalyses the reaction O-phospho-L-seryl-[pyruvate dehydrogenase E1 alpha subunit] + H2O = L-seryl-[pyruvate dehydrogenase E1 alpha subunit] + phosphate. Magnesium-dependent and calcium-stimulated. PDP1 activity strongly depends on its Ca(2+)-dependent binding to the lipoyl domain of E2 subunit of component of the pyruvate dehydrogenase complex. Its function is as follows. Mitochondrial enzyme that catalyzes the dephosphorylation and concomitant reactivation of the alpha subunit of the E1 component of the pyruvate dehydrogenase complex (PDC), thereby stimulating the conversion of pyruvate into acetyl-CoA. This Bos taurus (Bovine) protein is [Pyruvate dehydrogenase [acetyl-transferring]]-phosphatase 1, mitochondrial (PDP1).